The chain runs to 350 residues: Cobalt-precorrin-5B C(1)-methyltransferase (350 aa).

The protein belongs to the CbiD family.

The catalysed reaction is Co-precorrin-5B + S-adenosyl-L-methionine = Co-precorrin-6A + S-adenosyl-L-homocysteine. It functions in the pathway cofactor biosynthesis; adenosylcobalamin biosynthesis; cob(II)yrinate a,c-diamide from sirohydrochlorin (anaerobic route): step 6/10. Catalyzes the methylation of C-1 in cobalt-precorrin-5B to form cobalt-precorrin-6A. The sequence is that of Cobalt-precorrin-5B C(1)-methyltransferase from Syntrophotalea carbinolica (strain DSM 2380 / NBRC 103641 / GraBd1) (Pelobacter carbinolicus).